Here is a 372-residue protein sequence, read N- to C-terminus: Probable arabinan endo-1,5-alpha-L-arabinosidase B (372 aa).

The first 16 residues, 1–16, serve as a signal peptide directing secretion; the sequence is MTVLVALFCLVTWTLC. Residues 23–34 show a composition bias toward low complexity; it reads STQGTQQPQQPE. Residues 23-52 are disordered; the sequence is STQGTQQPQQPEKTPHPHPQPEDAFPPTHA. Catalysis depends on Asp59, which acts as the Proton acceptor. The N-linked (GlcNAc...) asparagine glycan is linked to Asn120. The active-site Proton donor is Glu252. The N-linked (GlcNAc...) asparagine glycan is linked to Asn363.

Belongs to the glycosyl hydrolase 43 family.

It localises to the secreted. It carries out the reaction Endohydrolysis of (1-&gt;5)-alpha-arabinofuranosidic linkages in (1-&gt;5)-arabinans.. Its pathway is glycan metabolism; L-arabinan degradation. Functionally, endo-1,5-alpha-L-arabinanase involved in degradation of pectin. Its preferred substrate is linear 1,5-alpha-L-arabinan. This Aspergillus fumigatus (strain CBS 144.89 / FGSC A1163 / CEA10) (Neosartorya fumigata) protein is Probable arabinan endo-1,5-alpha-L-arabinosidase B (abnB).